A 260-amino-acid chain; its full sequence is Transcription factor SUM-1 (260 aa).

The bHLH domain occupies 112-163 (DKRKAATLRERRRLRKVNEAFEALKRHTCANPNQRLPKVEILRNAIEYIEKL). Residues 171 to 208 (KANGDSEMDSAETSSNTSDAMTDGSSPGSYSSDKAQQY) are disordered. Residues 181–205 (AETSSNTSDAMTDGSSPGSYSSDKA) are compositionally biased toward polar residues.

In terms of assembly, efficient DNA binding requires dimerization with another bHLH protein. Homodimer, and heterodimer with the ubiquitous bHLH protein E12.

It is found in the nucleus. In terms of biological role, regulatory factor during embryogenesis. Conversion of pluripotent secondary mesenchyme cells to myogenic cells. It binds to the MCK enhancer element. The chain is Transcription factor SUM-1 (SUM-1) from Lytechinus variegatus (Green sea urchin).